The sequence spans 251 residues: PF03932 family protein CutC (251 aa).

Belongs to the CutC family.

The protein localises to the cytoplasm. The sequence is that of PF03932 family protein CutC from Agrobacterium fabrum (strain C58 / ATCC 33970) (Agrobacterium tumefaciens (strain C58)).